Here is a 173-residue protein sequence, read N- to C-terminus: Protein PLASTID REDOX INSENSITIVE 2, chloroplastic (173 aa).

A chloroplast-targeting transit peptide spans 1–55 (MATRAWVAAAVALNPQLLPLRSCSPTKSVSPAQRSASMGLRLRSGRPCLGKFVCR).

It localises to the plastid. The protein resides in the chloroplast stroma. The protein localises to the chloroplast nucleoid. Its function is as follows. Required for the activity of the plastid-encoded RNA polymerase (PEP) and full expression of genes transcribed by PEP. The chain is Protein PLASTID REDOX INSENSITIVE 2, chloroplastic from Zea mays (Maize).